A 536-amino-acid polypeptide reads, in one-letter code: Inactive beta-amylase 9 (536 aa).

Phosphoserine is present on S47. The tract at residues 511–536 (QASEAEVEAETASIGSGTGAPSLQTA) is disordered.

Belongs to the glycosyl hydrolase 14 family. In terms of tissue distribution, mostly expressed in young floral buds, flowers and roots, and, to a later extent, in stems and leaves.

It is found in the cytoplasm. The protein is Inactive beta-amylase 9 (BAM9) of Arabidopsis thaliana (Mouse-ear cress).